The chain runs to 354 residues: Clavesin-1 (354 aa).

Residues 118-279 (IKRALIDGFP…EFGGTLPPYD (162 aa)) form the CRAL-TRIO domain. Positions 317-354 (RECSPKPMKRSQSVVEAGTLKHEEKGENENTQPLLALD) are disordered. The span at 335 to 344 (TLKHEEKGEN) shows a compositional bias: basic and acidic residues. Residues 345–354 (ENTQPLLALD) show a composition bias toward polar residues.

As to quaternary structure, forms a complex with clathrin heavy chain and gamma-adaptin.

The protein resides in the golgi apparatus. It localises to the trans-Golgi network membrane. Its subcellular location is the early endosome membrane. The protein localises to the cytoplasmic vesicle. It is found in the clathrin-coated vesicle. Functionally, required for normal morphology of late endosomes and/or lysosomes in neurons. Binds phosphatidylinositol 3,5-bisphosphate (PtdIns(3,5)P2). The sequence is that of Clavesin-1 (Clvs1) from Mus musculus (Mouse).